A 724-amino-acid polypeptide reads, in one-letter code: Probable protein phosphatase 2C 62 (724 aa).

The segment at 357-385 (DELISTSEATRHSVDEIAQKPIIDTSEKN) is disordered. The segment covering 365–374 (ATRHSVDEIA) has biased composition (basic and acidic residues). The 238-residue stretch at 482-719 (DSGFASLQSP…DAVTVIISFV (238 aa)) folds into the PPM-type phosphatase domain. Positions 514, 515, 643, and 710 each coordinate Mn(2+).

This sequence belongs to the PP2C family. Mg(2+) serves as cofactor. Mn(2+) is required as a cofactor.

It catalyses the reaction O-phospho-L-seryl-[protein] + H2O = L-seryl-[protein] + phosphate. The catalysed reaction is O-phospho-L-threonyl-[protein] + H2O = L-threonyl-[protein] + phosphate. The protein is Probable protein phosphatase 2C 62 of Arabidopsis thaliana (Mouse-ear cress).